The following is a 1603-amino-acid chain: Vitellogenin-3 (1603 aa).

An N-terminal signal peptide occupies residues 1–15; that stretch reads MKSIIIASLVALAIA. One can recognise a Vitellogenin domain in the interval 24 to 685; sequence FSPKSEYVYK…EKNAFLPKEV (662 aa). Asparagine 1266 carries N-linked (GlcNAc...) asparagine glycosylation. The region spanning 1306–1475 is the VWFD domain; sequence ATCKVGQSEV…SYLLKNEECE (170 aa). Disulfide bonds link cysteine 1308–cysteine 1438 and cysteine 1330–cysteine 1474.

In terms of tissue distribution, expressed in the intestine of adult hermaphrodites.

The protein resides in the secreted. Functionally, precursor of the egg-yolk proteins that are sources of nutrients during embryonic development. Together with other vitellogenins, may play a role in modulating life-span, acting via induction of autophagy and lysosomal lipolysis. This chain is Vitellogenin-3 (vit-3), found in Caenorhabditis elegans.